The following is a 653-amino-acid chain: Chaperone protein dnaK3 (653 aa).

Thr-197 carries the phosphothreonine; by autocatalysis modification.

It belongs to the heat shock protein 70 family.

In terms of biological role, acts as a chaperone. The protein is Chaperone protein dnaK3 (dnaK3) of Nostoc sp. (strain PCC 7120 / SAG 25.82 / UTEX 2576).